The sequence spans 107 residues: Glutaredoxin 4 (107 aa).

In terms of domain architecture, Glutaredoxin spans 4–106 (LDKIKKQISE…TLLAEVAAKH (103 aa)). Position 21 (Lys-21) interacts with glutathione. Cys-29 provides a ligand contact to [2Fe-2S] cluster. Residues Arg-58, Phe-70, and 83-84 (CD) contribute to the glutathione site.

Belongs to the glutaredoxin family. Monothiol subfamily. As to quaternary structure, homodimer.

The protein resides in the cytoplasm. Monothiol glutaredoxin involved in the biogenesis of iron-sulfur clusters. The protein is Glutaredoxin 4 (grxD) of Haemophilus influenzae (strain ATCC 51907 / DSM 11121 / KW20 / Rd).